Consider the following 244-residue polypeptide: Putative outer membrane protein RC0105 (244 aa).

The N-terminal stretch at methionine 1 to alanine 23 is a signal peptide.

It belongs to the OmpW/AlkL family.

The protein resides in the cell outer membrane. The sequence is that of Putative outer membrane protein RC0105 from Rickettsia conorii (strain ATCC VR-613 / Malish 7).